The primary structure comprises 760 residues: Polyribonucleotide nucleotidyltransferase (760 aa).

Residues Asp-492 and Asp-498 each coordinate Mg(2+). The KH domain occupies 559-618 (PQHAEVFVNPDIIRIIIGPGGKNIKAITATTGASIDIEDSGRVSIFAPTLEAMEMAREMV). Residues 628-702 (GKNYTGKVRK…SRKAVLLEEQ (75 aa)) enclose the S1 motif domain. Residues 706 to 760 (WKPEDTARPSGPREGGRRDGGRDGRRDGGRDGRRDGGRDGGRRDGGRRDGGRDRN) are disordered. A compositionally biased stretch (basic and acidic residues) spans 719-760 (EGGRRDGGRDGRRDGGRDGRRDGGRDGGRRDGGRRDGGRDRN).

Belongs to the polyribonucleotide nucleotidyltransferase family. Mg(2+) serves as cofactor.

Its subcellular location is the cytoplasm. The catalysed reaction is RNA(n+1) + phosphate = RNA(n) + a ribonucleoside 5'-diphosphate. Functionally, involved in mRNA degradation. Catalyzes the phosphorolysis of single-stranded polyribonucleotides processively in the 3'- to 5'-direction. The sequence is that of Polyribonucleotide nucleotidyltransferase from Nitratidesulfovibrio vulgaris (strain ATCC 29579 / DSM 644 / CCUG 34227 / NCIMB 8303 / VKM B-1760 / Hildenborough) (Desulfovibrio vulgaris).